The following is a 320-amino-acid chain: Serpentine receptor class delta-28 (320 aa).

The next 7 helical transmembrane spans lie at 5–25 (LLHT…MYLA), 38–58 (AIIT…FFVM), 83–103 (ACYI…IWMI), 122–142 (SLVF…ATWI), 176–196 (LTLI…YAWI), 230–250 (FLPS…TQLI), and 258–278 (LVSV…ILFV).

Belongs to the nematode receptor-like protein srd family.

The protein resides in the membrane. The polypeptide is Serpentine receptor class delta-28 (srd-28) (Caenorhabditis elegans).